An 873-amino-acid polypeptide reads, in one-letter code: K(+)/H(+) antiporter 1 (873 aa).

The Extracellular portion of the chain corresponds to 1 to 23 (MANTVGGILSGVNPFHYNSSSPL). Residues 24–44 (TLFLFQACLILLVCNLIHIPF) traverse the membrane as a helical segment. Over 45-51 (SMMRQPK) the chain is Cytoplasmic. Residues 52-72 (VISEVISGVILGPTIFGQIPN) traverse the membrane as a helical segment. Residues 73 to 82 (YTNTIFPTSS) are Extracellular-facing. A helical transmembrane segment spans residues 83 to 103 (IPGLNLVANLGIILFMFFLGL). Topologically, residues 104 to 116 (EVDIAFIKKHLKK) are cytoplasmic. Residues 117-137 (ALVIGIVTLAVPFGFGCLLAI) form a helical membrane-spanning segment. At 138-154 (PLFHTYANKTEGERHIK) the chain is on the extracellular side. The helical transmembrane segment at 155–175 (FSVFMVFIAVSISVTAFPVLC) threads the bilayer. Over 176–188 (RILNELRLIKDRA) the chain is Cytoplasmic. Residues 189–209 (GIVVLAAGIINDIMGWILLAL) form a helical membrane-spanning segment. Residues 210 to 220 (SIILSSAEGSP) lie on the Extracellular side of the membrane. The chain crosses the membrane as a helical span at residues 221–241 (VNTVYILLITFAWFLIYFFPL). The Cytoplasmic segment spans residues 242 to 267 (KYLLRWVLIRTHELDRSKPSPLATMC). The chain crosses the membrane as a helical span at residues 268–288 (ILFIMFISAYFTDIIGVHPIF). Over 289–316 (GAFIAGLVVPRDDHYVVKLTERMEDIPN) the chain is Extracellular. Residues 317-337 (IVFIPIYFAVAGLNVDLTLLN) form a helical membrane-spanning segment. The Cytoplasmic portion of the chain corresponds to 338–341 (EGRD). The helical transmembrane segment at 342–362 (WGYVFATIGIAIFTKIISGTL) threads the bilayer. Residues 363–375 (TAKLTGLFWREAT) are Extracellular-facing. The chain crosses the membrane as a helical span at residues 376–396 (AAGVLMSCKGIVEIVVLTVGL). At 397-404 (NAGIISRK) the chain is on the cytoplasmic side. The helical transmembrane segment at 405-425 (IFGMFVLMALVSTFVTTPLTQ) threads the bilayer. The Extracellular portion of the chain corresponds to 426 to 726 (LVYPDSYRDG…DRFKRKRFNL (301 aa)). At Ser557 the chain carries Phosphoserine. Lys562 is covalently cross-linked (Glycyl lysine isopeptide (Lys-Gly) (interchain with G-Cter in ubiquitin)). Residues 727-747 (LLPKPYLTQSDYLGLYLLLLI) traverse the membrane as a helical segment. The Cytoplasmic segment spans residues 748–873 (CYRDGYNNDN…TLIVHHFSSE (126 aa)).

It belongs to the monovalent cation:proton antiporter 2 (CPA2) transporter (TC 2.A.37) family.

The protein localises to the membrane. Functionally, potassium-proton antiport. This Saccharomyces cerevisiae (strain ATCC 204508 / S288c) (Baker's yeast) protein is K(+)/H(+) antiporter 1 (KHA1).